The following is a 254-amino-acid chain: tRNA uridine(34) hydroxylase (254 aa).

One can recognise a Rhodanese domain in the interval 123-217; it reads QDPNVILLDT…YLESIPESES (95 aa). The active-site Cysteine persulfide intermediate is Cys-177.

The protein belongs to the TrhO family.

The catalysed reaction is uridine(34) in tRNA + AH2 + O2 = 5-hydroxyuridine(34) in tRNA + A + H2O. Catalyzes oxygen-dependent 5-hydroxyuridine (ho5U) modification at position 34 in tRNAs. The protein is tRNA uridine(34) hydroxylase of Legionella pneumophila (strain Corby).